A 223-amino-acid chain; its full sequence is MMIAGIDEAGKGPVIGPMCIGGVKIEESRAHILKVLGVADSKKLTPKKREQLASQIKKHADGFFILEITPAQIDELRKIMSMNEIMVICFAKVLEQLKPDIVYADAADVKAERFAENLRRQYAKTNPAHAKKIEIISMHQADAIYPVVSAASIIAKVRRDELIEEIKKEWSVDFGSGYPSDPKTKAFLLKWGKEHDGKFPEIVRQSWQTVENIREELEKAGKK.

Positions 1-219 constitute an RNase H type-2 domain; the sequence is MMIAGIDEAG…VENIREELEK (219 aa). D7, E8, and D105 together coordinate a divalent metal cation.

This sequence belongs to the RNase HII family. Mn(2+) is required as a cofactor. Requires Mg(2+) as cofactor.

It localises to the cytoplasm. The enzyme catalyses Endonucleolytic cleavage to 5'-phosphomonoester.. Endonuclease that specifically degrades the RNA of RNA-DNA hybrids. In Methanosarcina acetivorans (strain ATCC 35395 / DSM 2834 / JCM 12185 / C2A), this protein is Ribonuclease HII.